We begin with the raw amino-acid sequence, 280 residues long: Pantothenate synthetase (280 aa).

ATP is bound at residue 30–37 (MGYLHEGH). H37 functions as the Proton donor in the catalytic mechanism. (R)-pantoate is bound at residue Q61. Q61 contributes to the beta-alanine binding site. ATP is bound at residue 147–150 (GQKD). Q153 is a (R)-pantoate binding site. Residues V176 and 184–187 (MSSR) each bind ATP.

It belongs to the pantothenate synthetase family. Homodimer.

The protein resides in the cytoplasm. It catalyses the reaction (R)-pantoate + beta-alanine + ATP = (R)-pantothenate + AMP + diphosphate + H(+). It functions in the pathway cofactor biosynthesis; (R)-pantothenate biosynthesis; (R)-pantothenate from (R)-pantoate and beta-alanine: step 1/1. In terms of biological role, catalyzes the condensation of pantoate with beta-alanine in an ATP-dependent reaction via a pantoyl-adenylate intermediate. The protein is Pantothenate synthetase of Thermosipho melanesiensis (strain DSM 12029 / CIP 104789 / BI429).